A 355-amino-acid chain; its full sequence is MIGEKKKCIGLIFGGHSNEHEVSISSAKTVFKAFKAQINRERFTVKAFYINKYGDWLDSDISEKILTGEIENYKTKKQEIFNQEKINFLDGIEFQNIDVWFPLLHGFNGEDGSIHGLIRFTKKPLVGCGIIGSALGMDKILMKTIFSNHKLPQVNYLVFQNEDLNDKQVKNKIINEILKKLKFPVFVKPSNSGSSLGISKVKNESEILLALEKAWGIDPRILIEEGLEVREIECGIIGNSKLITSEIGEVNYESDWYDYDSKYHSNNKIIIPAEIDSKITNEIKEIAIKSCRALNIFGFARVDFFLEKSSNKILLNEINTIPGFTKNSMFPMLWEASGLKIEQLVAKLVDISLDL.

Residues 143 to 350 form the ATP-grasp domain; it reads KTIFSNHKLP…IEQLVAKLVD (208 aa). 178-233 is an ATP binding site; that stretch reads LKKLKFPVFVKPSNSGSSLGISKVKNESEILLALEKAWGIDPRILIEEGLEVREIE. Residues aspartate 303, glutamate 317, and asparagine 319 each contribute to the Mg(2+) site.

It belongs to the D-alanine--D-alanine ligase family. The cofactor is Mg(2+). It depends on Mn(2+) as a cofactor.

It localises to the cytoplasm. It carries out the reaction 2 D-alanine + ATP = D-alanyl-D-alanine + ADP + phosphate + H(+). The protein operates within cell wall biogenesis; peptidoglycan biosynthesis. In terms of biological role, cell wall formation. The sequence is that of D-alanine--D-alanine ligase from Prochlorococcus marinus (strain MIT 9301).